A 198-amino-acid polypeptide reads, in one-letter code: Nudix hydrolase 21, chloroplastic (198 aa).

The transit peptide at 1-37 directs the protein to the chloroplast; sequence MISLFISNFSNLSNLSPTFDNMNMNIPSKKIVPVPTP. One can recognise a Nudix hydrolase domain in the interval 59–191; it reads GYRQVVGCVP…WMREALEAFI (133 aa). Residues 98–119 carry the Nudix box motif; the sequence is GGWEIDESIEEAALRETIEEAG. Glu-113 and Glu-117 together coordinate Mg(2+).

This sequence belongs to the Nudix hydrolase family. The cofactor is Mg(2+). Mn(2+) is required as a cofactor. Expressed in roots, leaves, stems and inflorescences.

Its subcellular location is the plastid. It is found in the chloroplast. Probably mediates the hydrolysis of some nucleoside diphosphate derivatives. In Arabidopsis thaliana (Mouse-ear cress), this protein is Nudix hydrolase 21, chloroplastic (NUDT21).